The chain runs to 179 residues: Bifunctional protein PyrR (179 aa).

The PRPP-binding signature appears at 100–112 (VILVDDVLFTGRT).

The protein belongs to the purine/pyrimidine phosphoribosyltransferase family. PyrR subfamily.

It catalyses the reaction UMP + diphosphate = 5-phospho-alpha-D-ribose 1-diphosphate + uracil. In terms of biological role, regulates the transcription of the pyrimidine nucleotide (pyr) operon in response to exogenous pyrimidines. Functionally, also displays a weak uracil phosphoribosyltransferase activity which is not physiologically significant. This Haemophilus influenzae (strain 86-028NP) protein is Bifunctional protein PyrR.